Reading from the N-terminus, the 92-residue chain is Small ribosomal subunit protein uS19 (92 aa).

It belongs to the universal ribosomal protein uS19 family.

Its function is as follows. Protein S19 forms a complex with S13 that binds strongly to the 16S ribosomal RNA. The sequence is that of Small ribosomal subunit protein uS19 from Variovorax paradoxus (strain S110).